Consider the following 194-residue polypeptide: MKVIIVKIWNKINGITLINDDFLNVDLPNESIDLIVTSPPYNVGIDYNQHDDTIPYEEYLDWTKQWLKKALTLLKKDGRLCLNIPLDKNKGGIKPVYADIVKIALDVGFKYQTTIIWNEQNISRRTAWGSFMSASAPYVIAPVETIVVLYKESWKKLSKGESDITKEEFIEWTNGLWTFPGESKKELDIQHHFR.

This sequence belongs to the N(4)/N(6)-methyltransferase family. N(4) subfamily.

The catalysed reaction is a 2'-deoxycytidine in DNA + S-adenosyl-L-methionine = an N(4)-methyl-2'-deoxycytidine in DNA + S-adenosyl-L-homocysteine + H(+). Functionally, a beta subtype methylase that recognizes the double-stranded sequence 5'-CCGG-3', methylates C-1 on both strands, and protects the DNA from cleavage by the MjaVI endonuclease. This Methanocaldococcus jannaschii (strain ATCC 43067 / DSM 2661 / JAL-1 / JCM 10045 / NBRC 100440) (Methanococcus jannaschii) protein is Type II methyltransferase M.MjaVI (mjaVIM).